Consider the following 252-residue polypeptide: MRKRIGIGALNDDEYLKQYEEVGNELIEQQSDEIASQLSTFQEALKTFAREHATEIKQNSQFRNTFVKLALKIGLDPFVSGSDESAWAAVGMNEFYYQVAVRVIEVCYATQMENGGLLSVSQVCRFLNEENEAFGHEWLRETDVVRAVDSLAPLGPGFVLEKIAGKQYIRSLPLELNTDQNVVLEAVEILGYVTISILRDNYAWERSRCIQVLNDLVSKSLLWIDSQGVEMAYWGASNLIDDQAQRFLYENF.

It belongs to the SNF8 family. In terms of assembly, component of the endosomal sorting complex required for transport II (ESCRT-II).

It is found in the cytoplasm. Its subcellular location is the nucleus. The protein localises to the endosome membrane. Its function is as follows. Component of the endosomal sorting complex required for transport II (ESCRT-II), which is required for multivesicular body (MVB) formation and sorting of endosomal cargo proteins into MVBs. The MVB pathway mediates delivery of transmembrane proteins into the lumen of the lysosome for degradation. The ESCRT-II complex is probably involved in the recruitment of the ESCRT-III complex. Negatively regulates meiotic spindle pole body maturation via indirect regulation of the pcp1 gene. Required for efficient entry into pre-meiotic S phase. The polypeptide is Vacuolar-sorting protein dot2 (dot2) (Schizosaccharomyces pombe (strain 972 / ATCC 24843) (Fission yeast)).